The primary structure comprises 69 residues: Sec-independent protein translocase protein TatA (69 aa).

A helical membrane pass occupies residues 1–21; that stretch reads MFGLGTMEMVIILVIVLVIFG. The disordered stretch occupies residues 44 to 69; it reads NAEDDAPAEPEVSKPAAAESTEKKDA.

The protein belongs to the TatA/E family. The Tat system comprises two distinct complexes: a TatABC complex, containing multiple copies of TatA, TatB and TatC subunits, and a separate TatA complex, containing only TatA subunits. Substrates initially bind to the TatABC complex, which probably triggers association of the separate TatA complex to form the active translocon.

Its subcellular location is the cell inner membrane. Functionally, part of the twin-arginine translocation (Tat) system that transports large folded proteins containing a characteristic twin-arginine motif in their signal peptide across membranes. TatA could form the protein-conducting channel of the Tat system. This Magnetococcus marinus (strain ATCC BAA-1437 / JCM 17883 / MC-1) protein is Sec-independent protein translocase protein TatA.